The primary structure comprises 130 residues: Hydrogenase maturation factor HypA (130 aa).

Residue histidine 2 coordinates Ni(2+). Residues cysteine 74, cysteine 77, cysteine 90, and cysteine 93 each contribute to the Zn(2+) site.

Belongs to the HypA/HybF family.

In terms of biological role, involved in the maturation of [NiFe] hydrogenases. Required for nickel insertion into the metal center of the hydrogenase. This is Hydrogenase maturation factor HypA from Desulfatibacillum aliphaticivorans.